Reading from the N-terminus, the 152-residue chain is Transcriptional regulator MraZ (152 aa).

SpoVT-AbrB domains are found at residues 5–52 (ATLV…PLPE) and 81–124 (ASEC…DETT).

Belongs to the MraZ family. Forms oligomers.

It is found in the cytoplasm. Its subcellular location is the nucleoid. In terms of biological role, negatively regulates its own expression and that of the subsequent genes in the proximal part of the division and cell wall (dcw) gene cluster. Acts by binding directly to DNA. May also regulate the expression of genes outside the dcw cluster. In Salmonella paratyphi A (strain ATCC 9150 / SARB42), this protein is Transcriptional regulator MraZ.